The chain runs to 146 residues: Small ribosomal subunit protein eS19 (146 aa).

It belongs to the eukaryotic ribosomal protein eS19 family.

The sequence is that of Small ribosomal subunit protein eS19 (RPS19A) from Oryza sativa subsp. japonica (Rice).